Here is a 96-residue protein sequence, read N- to C-terminus: Prokineticin Bm8-f (96 aa).

Residues 1-19 (MKCFAQIVVLLLVIAFSHG) form the signal peptide. 5 disulfides stabilise this stretch: cysteine 26–cysteine 38, cysteine 32–cysteine 50, cysteine 37–cysteine 78, cysteine 60–cysteine 86, and cysteine 80–cysteine 95.

This sequence belongs to the AVIT (prokineticin) family. As to expression, expressed by the skin glands.

The protein localises to the secreted. Its function is as follows. Potent agonist for both PKR1/PROKR1 and PKR2/PROKR2, and inducer of a potent and long-lasting hyperalgesia. Also potentiates capsaicin-induced TRPV1 current, when tested on DRG neurons. At subnanomolar concentrations, this protein both induces potent chemotaxis of macrophages and stimulates LPS-induced production of the pro-inflammatory cytokines IL-1 and IL-12. In vivo, potently stimulates the contraction of the guinea-pig gastrointestinal (GI) smooth muscle (nanomolar concentration). This Bombina maxima (Giant fire-bellied toad) protein is Prokineticin Bm8-f.